A 574-amino-acid polypeptide reads, in one-letter code: Acyloxyacyl hydrolase (574 aa).

An N-terminal signal peptide occupies residues 1–22 (MKFPWKVFKTTLLLLLLSHSLA). Positions 23-33 (SVPSEDQPGDS) are excised as a propeptide. One can recognise a Saposin B-type domain in the interval 36–117 (HGQSCLGCVV…YALEFCKRGA (82 aa)). The important for enzyme activity, localization to cytoplasmic vesicles, and protein stability stretch occupies residues 37–69 (GQSCLGCVVLVSVIEQLAEVHNSSVQVAMERLC). Intrachain disulfides connect Cys-40–Cys-113, Cys-43–Cys-107, Cys-69–Cys-82, Cys-122–Cys-452, Cys-159–Cys-168, Cys-205–Cys-229, Cys-248–Cys-328, and Cys-375–Cys-458. Asn-58 carries an N-linked (GlcNAc...) asparagine glycan. The interval 172–176 (ELSIK) is lipopolysaccharide binding. The Ca(2+) site is built by Asp-183, Asp-185, Asp-187, His-189, Asp-204, Asn-206, Asp-207, Asp-209, Val-212, Asp-222, Asp-226, Asn-228, Asn-230, Ile-232, and Glu-244. Asn-206 carries an N-linked (GlcNAc...) asparagine glycan. Ser-262 is an active-site residue. N-linked (GlcNAc...) asparagine glycosylation is found at Asn-408 and Asn-465.

Heterodimer of the large and small subunits; disulfide-linked. The cofactor is Ca(2+). Post-translationally, cleaved into a large and a small subunit. In terms of processing, the small subunit is N-glycosylated. In terms of tissue distribution, detected in peritoneal macrophages (at protein level). Strongly expressed in kidney cortex, where it may be produced by proximal tubule cells. In liver, expressed at high levels in Kupffer cells. Expressed by dendritic cells. Detected at low levels in alveolar macrophages.

The protein localises to the secreted. It localises to the cytoplasmic vesicle. The catalysed reaction is a 3-(acyloxy)acyl derivative of bacterial toxin + H2O = a 3-hydroxyacyl derivative of bacterial toxin + a fatty acid + H(+). Functionally, removes the secondary (acyloxyacyl-linked) fatty acyl chains from the lipid A region of bacterial lipopolysaccharides (LPS). By breaking down LPS, terminates the host response to bacterial infection and prevents prolonged and damaging inflammatory responses. In peritoneal macrophages, seems to be important for recovery from a state of immune tolerance following infection by Gram-negative bacteria. The protein is Acyloxyacyl hydrolase of Mus musculus (Mouse).